We begin with the raw amino-acid sequence, 634 residues long: DNA-directed RNA polymerase subunit gamma (634 aa).

Zn(2+) is bound by residues Cys-74, Cys-76, Cys-89, and Cys-92. 3 residues coordinate Mg(2+): Asp-471, Asp-473, and Asp-475.

It belongs to the RNA polymerase beta' chain family. RpoC1 subfamily. As to quaternary structure, in cyanobacteria the RNAP catalytic core is composed of 2 alpha, 1 beta, 1 beta', 1 gamma and 1 omega subunit. When a sigma factor is associated with the core the holoenzyme is formed, which can initiate transcription. Mg(2+) serves as cofactor. It depends on Zn(2+) as a cofactor.

It catalyses the reaction RNA(n) + a ribonucleoside 5'-triphosphate = RNA(n+1) + diphosphate. Functionally, DNA-dependent RNA polymerase catalyzes the transcription of DNA into RNA using the four ribonucleoside triphosphates as substrates. This is DNA-directed RNA polymerase subunit gamma from Prochlorococcus marinus (strain AS9601).